The sequence spans 113 residues: HIG1 domain-containing protein C25B8.07c, mitochondrial (113 aa).

Residues 1–27 are disordered; that stretch reads MSSKLPKKSEENLELPTFPASEESLSR. Positions 12-103 constitute an HIG1 domain; sequence NLELPTFPAS…PPRREAPSNS (92 aa). 2 helical membrane passes run 39 to 59 and 75 to 95; these read PFIP…GYYI and VMSQ…IGPP.

The protein localises to the mitochondrion membrane. The sequence is that of HIG1 domain-containing protein C25B8.07c, mitochondrial from Schizosaccharomyces pombe (strain 972 / ATCC 24843) (Fission yeast).